The sequence spans 391 residues: MLFLLSLKRIFIFRNHKFNIVGDVMGIEEEIRRIEEELKKTPYNKATQKHIGRLKAKLAKLREQAQSRGGGGGGKGYAVKKSGDATAAFVGFPSVGKSTLLNKLTNAKSEVGAYAFTTLTIVPGILEYKGAKIQLLDAPGIIVGASSGKGRGTEVLSAVRSADLILLTVDIYTLDHLPVLEKELYNVGIRLDQTPPDVKIKVKERGGINVSSTVPLTHIDEDTIEAILNEYRIHNADVVIREDITLEQFIDVVAGNRVYIPSLVVVNKIDLADEEYLKYIKQKLEEFGKDYILVSGNKGINLDLLKEKIYEKLGFIKIYLKPQGKKPDFDEPLIMRRGATVKDVCEKLHKDFVRNFRYAQVWGKSAKHPGQRVGLDHKLEDGDILTIVIKR.

The OBG-type G domain maps to Ala-85–Gly-314. GTP contacts are provided by residues Gly-91–Ser-98, Asp-137–Ile-141, and Asn-267–Asp-270. A TGS domain is found at Gly-314–Ile-389.

The protein belongs to the TRAFAC class OBG-HflX-like GTPase superfamily. OBG GTPase family.

This is an uncharacterized protein from Methanocaldococcus jannaschii (strain ATCC 43067 / DSM 2661 / JAL-1 / JCM 10045 / NBRC 100440) (Methanococcus jannaschii).